Consider the following 205-residue polypeptide: Thymidylate kinase (205 aa).

Residue 10-17 (GIDGAGKS) participates in ATP binding.

It belongs to the thymidylate kinase family.

The catalysed reaction is dTMP + ATP = dTDP + ADP. In terms of biological role, phosphorylation of dTMP to form dTDP in both de novo and salvage pathways of dTTP synthesis. In Ralstonia nicotianae (strain ATCC BAA-1114 / GMI1000) (Ralstonia solanacearum), this protein is Thymidylate kinase.